Consider the following 327-residue polypeptide: Phenylalanine--tRNA ligase alpha subunit (327 aa).

A Mg(2+)-binding site is contributed by E252.

Belongs to the class-II aminoacyl-tRNA synthetase family. Phe-tRNA synthetase alpha subunit type 1 subfamily. Tetramer of two alpha and two beta subunits. Mg(2+) serves as cofactor.

It localises to the cytoplasm. The catalysed reaction is tRNA(Phe) + L-phenylalanine + ATP = L-phenylalanyl-tRNA(Phe) + AMP + diphosphate + H(+). This Shewanella baltica (strain OS185) protein is Phenylalanine--tRNA ligase alpha subunit.